A 125-amino-acid polypeptide reads, in one-letter code: Temptin (125 aa).

An N-terminal signal peptide occupies residues 1–22 (MEQKRTLRVFLAVSLLCALANA). 2 disulfide bridges follow: Cys40/Cys125 and Cys79/Cys99. The disordered stretch occupies residues 78-125 (LCDMDSDGDGRSNGVELGDPECVWSQGETPARTTDLSHPGFDEATVSC). Over residues 103–113 (QGETPARTTDL) the composition is skewed to polar residues.

Binds to attractin and enticin. Produced by the albumen gland of the egg cordons.

Its subcellular location is the secreted. Functionally, a component of the complex of water-borne protein pheromones that stimulates attraction and mating behavior. Modulates pheromone signaling by direct binding to attractin. The polypeptide is Temptin (Aplysia californica (California sea hare)).